We begin with the raw amino-acid sequence, 211 residues long: Protein-L-isoaspartate O-methyltransferase (211 aa).

Serine 62 is an active-site residue.

Belongs to the methyltransferase superfamily. L-isoaspartyl/D-aspartyl protein methyltransferase family.

It is found in the cytoplasm. It carries out the reaction [protein]-L-isoaspartate + S-adenosyl-L-methionine = [protein]-L-isoaspartate alpha-methyl ester + S-adenosyl-L-homocysteine. Catalyzes the methyl esterification of L-isoaspartyl residues in peptides and proteins that result from spontaneous decomposition of normal L-aspartyl and L-asparaginyl residues. It plays a role in the repair and/or degradation of damaged proteins. In Shewanella piezotolerans (strain WP3 / JCM 13877), this protein is Protein-L-isoaspartate O-methyltransferase.